The primary structure comprises 1101 residues: MVSRRSSQARGALTAVVATLALALAGSGTALAASPIGEGTFDDGPEGWVAYGTDGPLDTSTGALCVAVPAGSAQYGVGVVLNGVAIEEGTTYTLRYTATASTDVTVRALVGQNGAPYGTVLDTSPALTSEPRQVTETFTASATYPATPAADDPEGQIAFQLGGFSADAWTFCLDDVALDSEVELLPHTSFAESLGPWSLYGTSEPVFADGRMCVDLPGGQGNPWDAGLVYNGVPVGEGESYVLSFTASATPDMPVRVLVGEGGGAYRTAFEQGSAPLTGEPATREYAFTSNLTFPPDGDAPGQVAFHLGKAGAYEFCISQVSLTTSATPPPGYEPDTGPRVRVNQVGYLPFGPKRATLVTDAAEPVAWELRDADGVVVADGTSEPRGVEPSAAQAVHVLDFSDVTTQGAGYTLVADGETSRPFDIDGDLYQQLRYDALNYFYLARSGTEIEADVVGEEYAREAGHVGVAPNQGDTDVPCIGPRDYYDGWTCDYRLDVSGGWYDAGDHGKYVVNGGIAVGQLLQTYERALHAGTADALADGTLDVPEHGNDVPDVLDEARWELEWMLSMIVPEGEYAGMVHHKVHDEGWTGLPLLPADDPQARSLHRPSTAATLNLSAVAAQGARLLEPYDPQLAQTLLEAARTTWAAAQEHPALYAPGEAGADGGGAYNDSQVADEFYWAAAELYLTTGEDAFATAVTTSPLHTADVFTADGFGWGSVAALGRLDLATVPNELPGLDAVQSSVVEGAQEYLAAQAGQGFGSLYSPPGGEYVWGSSSQVANNLVVVATAYDLTGDERFRAATLEGLDYLFGRNALNQSYVTGWGEVASHQQHSRWFAHQLDPSLPSPPPGSLAGGPNSQAATWDPTTKAAFPDGCAPSACYVDEIQAWSTNELTVNWNSALSWVASWVADQGSAEPVPTAPVVTRQPVDATVALGADATFTAEASGVPAPTVRWQVRAGRGWKDVAGATGTTLTVRATARTDGTRYRAVFTNAAGSVESAVVRLTVERAAPVVTQHPADVRARVGTRAVFRAAADGYPTPCVVWQVRWGGGSWRPIPWATSTTLSVPVTVLAAGTEYRAVFTNAVGTAATEPAELAVQRPRS.

The signal sequence occupies residues 1 to 32; it reads MVSRRSSQARGALTAVVATLALALAGSGTALA. 2 consecutive CBM-cenC domains span residues 64 to 173 and 212 to 318; these read LCVA…TFCL and MCVD…EFCI. Residues 329 to 880 are catalytic; it reads PPPGYEPDTG…PDGCAPSACY (552 aa). The active-site Nucleophile is the aspartate 506. Histidine 831 is an active-site residue. The segment at 838–865 is disordered; it reads QLDPSLPSPPPGSLAGGPNSQAATWDPT. Active-site residues include aspartate 882 and glutamate 891. Ig-like domains are found at residues 918 to 1006 and 1008 to 1097; these read TAPV…LTVE and AAPV…LAVQ.

This sequence belongs to the glycosyl hydrolase 9 (cellulase E) family.

It carries out the reaction Endohydrolysis of (1-&gt;4)-beta-D-glucosidic linkages in cellulose, lichenin and cereal beta-D-glucans.. Its function is as follows. The biological conversion of cellulose to glucose generally requires three types of hydrolytic enzymes: (1) Endoglucanases which cut internal beta-1,4-glucosidic bonds; (2) Exocellobiohydrolases that cut the disaccharide cellobiose from the non-reducing end of the cellulose polymer chain; (3) Beta-1,4-glucosidases which hydrolyze the cellobiose and other short cello-oligosaccharides to glucose. This Cellulomonas fimi (strain ATCC 484 / DSM 20113 / JCM 1341 / CCUG 24087 / LMG 16345 / NBRC 15513 / NCIMB 8980 / NCTC 7547 / NRS-133) protein is Endoglucanase C (cenC).